The sequence spans 123 residues: Ribonuclease P protein component (123 aa).

Belongs to the RnpA family. As to quaternary structure, consists of a catalytic RNA component (M1 or rnpB) and a protein subunit.

The enzyme catalyses Endonucleolytic cleavage of RNA, removing 5'-extranucleotides from tRNA precursor.. RNaseP catalyzes the removal of the 5'-leader sequence from pre-tRNA to produce the mature 5'-terminus. It can also cleave other RNA substrates such as 4.5S RNA. The protein component plays an auxiliary but essential role in vivo by binding to the 5'-leader sequence and broadening the substrate specificity of the ribozyme. The chain is Ribonuclease P protein component from Bordetella petrii (strain ATCC BAA-461 / DSM 12804 / CCUG 43448).